The following is a 142-amino-acid chain: Large ribosomal subunit protein uL13 (142 aa).

This sequence belongs to the universal ribosomal protein uL13 family. As to quaternary structure, part of the 50S ribosomal subunit.

This protein is one of the early assembly proteins of the 50S ribosomal subunit, although it is not seen to bind rRNA by itself. It is important during the early stages of 50S assembly. The polypeptide is Large ribosomal subunit protein uL13 (Pectobacterium carotovorum subsp. carotovorum (strain PC1)).